We begin with the raw amino-acid sequence, 210 residues long: Redox-sensing transcriptional repressor Rex (210 aa).

Positions 17–56 (SYLHLVKKAEADKLEYISGTVIAEELELEPIQVRKDLTIT) form a DNA-binding region, H-T-H motif. 91-96 (GAGSLG) contributes to the NAD(+) binding site.

Belongs to the transcriptional regulatory Rex family. As to quaternary structure, homodimer.

The protein resides in the cytoplasm. Its function is as follows. Modulates transcription in response to changes in cellular NADH/NAD(+) redox state. This Treponema denticola (strain ATCC 35405 / DSM 14222 / CIP 103919 / JCM 8153 / KCTC 15104) protein is Redox-sensing transcriptional repressor Rex.